The chain runs to 120 residues: uncharacterized protein (120 aa).

Residues 8-28 (LIVKWFVGLMLIMMMVAVSLF) form a helical membrane-spanning segment.

It localises to the membrane. This is an uncharacterized protein from Bacillus anthracis.